The chain runs to 227 residues: 7-cyano-7-deazaguanine synthase (227 aa).

Position 10–20 (10–20 (LSGGLDSCVAT)) interacts with ATP. Zn(2+) is bound by residues Cys-193, Cys-201, Cys-204, and Cys-207.

Belongs to the QueC family. Zn(2+) is required as a cofactor.

The enzyme catalyses 7-carboxy-7-deazaguanine + NH4(+) + ATP = 7-cyano-7-deazaguanine + ADP + phosphate + H2O + H(+). It participates in purine metabolism; 7-cyano-7-deazaguanine biosynthesis. Catalyzes the ATP-dependent conversion of 7-carboxy-7-deazaguanine (CDG) to 7-cyano-7-deazaguanine (preQ(0)). The chain is 7-cyano-7-deazaguanine synthase from Methanobrevibacter smithii (strain ATCC 35061 / DSM 861 / OCM 144 / PS).